The following is a 154-amino-acid chain: MLLYMSQPQEATSPPLHSVSVAGVVVREDGRLLAIRRADNGTWELPGGVLELDETPETGVAREVWEETGIRVEVDELTGVYKNTTRGIVALVFRCKPSGGVERTSSESTAVSWLTPDEVSERMAEVYAIRLLDALDGAGPHVRSHDGKHLIPAG.

The Nudix hydrolase domain maps to 15-136; the sequence is PLHSVSVAGV…YAIRLLDALD (122 aa). Mg(2+) contacts are provided by Gly48, Glu63, Glu66, and Glu67. Positions 48-69 match the Nudix box motif; the sequence is GVLELDETPETGVAREVWEETG.

The protein belongs to the Nudix hydrolase family.

The polypeptide is MutT-like protein (Streptomyces ambofaciens).